The chain runs to 329 residues: Flotillin-like protein FloA (329 aa).

Residues 4–24 form a helical membrane-spanning segment; the sequence is IWGFLILILVLIFLGVFFSFV.

This sequence belongs to the flotillin-like FloA family. In terms of assembly, homooligomerizes.

The protein localises to the cell membrane. The protein resides in the membrane raft. Found in functional membrane microdomains (FMM) that may be equivalent to eukaryotic membrane rafts. FMMs are highly dynamic and increase in number as cells age. Flotillins are thought to be important factors in membrane fluidity. This Dictyoglomus turgidum (strain DSM 6724 / Z-1310) protein is Flotillin-like protein FloA.